Reading from the N-terminus, the 210-residue chain is Uracil phosphoribosyltransferase (210 aa).

Residues arginine 78, arginine 103, and 130–138 (DPMLATGGT) contribute to the 5-phospho-alpha-D-ribose 1-diphosphate site. Uracil is bound by residues isoleucine 193 and 198-200 (GDA). Aspartate 199 contacts 5-phospho-alpha-D-ribose 1-diphosphate.

Belongs to the UPRTase family. The cofactor is Mg(2+).

The enzyme catalyses UMP + diphosphate = 5-phospho-alpha-D-ribose 1-diphosphate + uracil. It participates in pyrimidine metabolism; UMP biosynthesis via salvage pathway; UMP from uracil: step 1/1. Its activity is regulated as follows. Allosterically activated by GTP. Catalyzes the conversion of uracil and 5-phospho-alpha-D-ribose 1-diphosphate (PRPP) to UMP and diphosphate. This Stenotrophomonas maltophilia (strain K279a) protein is Uracil phosphoribosyltransferase.